Here is a 129-residue protein sequence, read N- to C-terminus: Small ribosomal subunit protein uS11 (129 aa).

Belongs to the universal ribosomal protein uS11 family. As to quaternary structure, part of the 30S ribosomal subunit. Interacts with proteins S7 and S18. Binds to IF-3.

Its function is as follows. Located on the platform of the 30S subunit, it bridges several disparate RNA helices of the 16S rRNA. Forms part of the Shine-Dalgarno cleft in the 70S ribosome. This is Small ribosomal subunit protein uS11 from Rhodopseudomonas palustris (strain HaA2).